The following is a 553-amino-acid chain: CTP synthase (553 aa).

An amidoligase domain region spans residues 1–270; sequence MTKYVFVTGG…DELICEELKL (270 aa). CTP is bound at residue Ser13. Ser13 contributes to the UTP binding site. Residues 14 to 19 and Asp71 contribute to the ATP site; that span reads SLGKGI. Positions 71 and 144 each coordinate Mg(2+). Residues 151–153, 191–196, and Lys227 each bind CTP; these read DIE and KTKPTQ. UTP is bound by residues 191–196 and Lys227; that span reads KTKPTQ. Residues 295 to 547 enclose the Glutamine amidotransferase type-1 domain; it reads TIGMVGKYVE…VEAARAHHEA (253 aa). Gly356 lines the L-glutamine pocket. Catalysis depends on Cys383, which acts as the Nucleophile; for glutamine hydrolysis. L-glutamine is bound by residues 384-387, Glu407, and Arg473; that span reads LGMQ. Active-site residues include His520 and Glu522.

This sequence belongs to the CTP synthase family. In terms of assembly, homotetramer.

It catalyses the reaction UTP + L-glutamine + ATP + H2O = CTP + L-glutamate + ADP + phosphate + 2 H(+). The enzyme catalyses L-glutamine + H2O = L-glutamate + NH4(+). The catalysed reaction is UTP + NH4(+) + ATP = CTP + ADP + phosphate + 2 H(+). Its pathway is pyrimidine metabolism; CTP biosynthesis via de novo pathway; CTP from UDP: step 2/2. Its activity is regulated as follows. Allosterically activated by GTP, when glutamine is the substrate; GTP has no effect on the reaction when ammonia is the substrate. The allosteric effector GTP functions by stabilizing the protein conformation that binds the tetrahedral intermediate(s) formed during glutamine hydrolysis. Inhibited by the product CTP, via allosteric rather than competitive inhibition. Functionally, catalyzes the ATP-dependent amination of UTP to CTP with either L-glutamine or ammonia as the source of nitrogen. Regulates intracellular CTP levels through interactions with the four ribonucleotide triphosphates. This is CTP synthase from Paraburkholderia phymatum (strain DSM 17167 / CIP 108236 / LMG 21445 / STM815) (Burkholderia phymatum).